The following is a 191-amino-acid chain: Calcium-binding protein L (191 aa).

Glycine 2 carries the N-myristoyl glycine lipid modification. EF-hand domains are found at residues glutamate 25–aspartate 59, tyrosine 60–serine 95, and proline 96–threonine 131. Ca(2+) is bound by residues aspartate 73, aspartate 75, asparagine 77, arginine 79, and glutamate 84.

It belongs to the recoverin family.

The chain is Calcium-binding protein L (cbpL) from Dictyostelium discoideum (Social amoeba).